Here is a 501-residue protein sequence, read N- to C-terminus: MSSGQQPPRRVTNVGSLLLTPQENESLFSFLGKKCVTMSSAVVQLYAADRNCMWAKKCSGVACLVKDNPQRSYFLRIFDIKDGKLLWEQELYNNFVYNSPRGYFHTFAGDTCQVALNFANEEEAKKFRKAVTDLLGRRQRKSEKRRDAPNGPNLPMATVDIKNPEITTNRFYGSQVNNISHTKEKKKGKAKKKRLTKADIGTPSNFQHIGHVGWDPNTGFDLNNLDPELKNLFDMCGISEAQLKDRETSKVIYDFIEKTGGVEAVKNELRRQAPPPPPPSRGGPPPPPPPPHSSGPPPPPARGRGAPPPPPSRAPTAAPPPPPPSRPGVVVPPPPPNRMYPPPPPALPSSAPSGPPPPPPPSMAGSTAPPPPPPPPPPPGPPPPPGLPSDGDHQVPAPSGNKAALLDQIREGAQLKKVEQNSRPVSCSGRDALLDQIRQGIQLKSVSDGQESTPPTPAPTSGIVGALMEVMQKRSKAIHSSDEDEDDDDEEDFEDDDEWED.

The residue at position 2 (Ser-2) is an N-acetylserine. The region spanning 31–138 is the WH1 domain; that stretch reads LGKKCVTMSS…KAVTDLLGRR (108 aa). A disordered region spans residues 135 to 158; sequence LGRRQRKSEKRRDAPNGPNLPMAT. The region spanning 200–213 is the CRIB domain; sequence IGTPSNFQHIGHVG. Ser-239 carries the post-translational modification Phosphoserine; by TNK2. Tyr-253 is modified (phosphotyrosine; by FAK1 and TNK2). Disordered regions lie at residues 263-403 and 442-501; these read EAVK…GNKA and QLKS…EWED. The span at 273–387 shows a compositional bias: pro residues; that stretch reads APPPPPPSRG…PPGPPPPPGL (115 aa). Arg-304 is subject to Omega-N-methylarginine. WH2 domains follow at residues 401 to 418 and 429 to 446; these read NKAA…LKKV and GRDA…LKSV. Over residues 442–453 the composition is skewed to polar residues; the sequence is QLKSVSDGQEST. Phosphoserine occurs at positions 480 and 481. Acidic residues predominate over residues 482–501; the sequence is DEDEDDDDEEDFEDDDEWED.

Binds actin and the Arp2/3 complex. Interacts with CDC42. Interacts with FCHSD1. Interacts with FCHSD2. Binds to SH3 domains of GRB2. Interacts with the C-terminal SH3 domain of DNMBP. Interacts with SNX9. Interacts with the WW domains of PRPF40A/FBP11. Interacts with PTK2/FAK1. Interacts with PACSIN1, PACSIN2 and PACSIN3. Interacts with NOSTRIN. Binds to TNK2. Interacts with SNX33. Interacts with NONO (via second RRM domain); the interaction is direct. Component of a multiprotein complex with NONO and SFPQ; associates with the complex via direct interaction with NONO. Post-translationally, phosphorylation at Ser-239, Tyr-253, Ser-480 and Ser-481 enhances actin polymerization activity.

The protein localises to the cytoplasm. It localises to the cytoskeleton. It is found in the nucleus. Regulates actin polymerization by stimulating the actin-nucleating activity of the Arp2/3 complex. Involved in various processes, such as mitosis and cytokinesis, via its role in the regulation of actin polymerization. Together with CDC42, involved in the extension and maintenance of the formation of thin, actin-rich surface projections called filopodia. In addition to its role in the cytoplasm, also plays a role in the nucleus by regulating gene transcription, probably by promoting nuclear actin polymerization. Binds to HSF1/HSTF1 and forms a complex on heat shock promoter elements (HSE) that negatively regulates HSP90 expression. Plays a role in dendrite spine morphogenesis. In Mus musculus (Mouse), this protein is Actin nucleation-promoting factor WASL (Wasl).